Consider the following 664-residue polypeptide: E3 ubiquitin-protein ligase CHFR (664 aa).

The 52-residue stretch at 38–89 folds into the FHA domain; sequence WTIGRRRGCDLSFPSNKLVSGDHCKLTVDEISGEVTLEDTSTNGTVINKLQV. Disordered stretches follow at residues 170–220 and 245–264; these read LEEP…GRSS and ESKD…GDGE. Residues 174–202 show a composition bias toward polar residues; the sequence is QPSTSTSDLLPTASTSSTEPELTSAGQKH. The segment covering 203 to 215 has biased composition (low complexity); the sequence is SSSSGPGNTSISP. A compositionally biased stretch (basic and acidic residues) spans 245–263; that stretch reads ESKDHEELEPAKKKMKGDG. The RING-type zinc finger occupies 303–342; it reads CIICQDLLHDCVSLQPCMHTFCAACYSGWMERSSLCPTCR. Thr385 bears the Phosphothreonine mark. Residues 389-413 form a disordered region; the sequence is LQPKVRRSFSDEEGSSEDLLELSDV. Acidic residues predominate over residues 399 to 413; sequence DEEGSSEDLLELSDV. A PBZ-type zinc finger spans residues 633–655; the sequence is PDCYWGRNCRTQVKAHHAMKFNH.

Belongs to the CHFR family. Interacts with HDAC1 and HDAC2. Interacts with PML (with sumoylated form of PML). In terms of processing, poly-ADP-ribosylated. In addition to binding non covalently poly(ADP-ribose) via its PBZ-type zinc finger, the protein is also covalently poly-ADP-ribosylated by PARP1. Autoubiquitinated; may regulate its cellular level. Post-translationally, phosphorylated by PKB. Phosphorylation may affect its E3 ligase activity.

It is found in the nucleus. The protein localises to the PML body. The catalysed reaction is S-ubiquitinyl-[E2 ubiquitin-conjugating enzyme]-L-cysteine + [acceptor protein]-L-lysine = [E2 ubiquitin-conjugating enzyme]-L-cysteine + N(6)-ubiquitinyl-[acceptor protein]-L-lysine.. Its pathway is protein modification; protein ubiquitination. In terms of biological role, E3 ubiquitin-protein ligase that functions in the antephase checkpoint by actively delaying passage into mitosis in response to microtubule poisons. Acts in early prophase before chromosome condensation, when the centrosome move apart from each other along the periphery of the nucleus. Probably involved in signaling the presence of mitotic stress caused by microtubule poisons by mediating the 'Lys-48'-linked ubiquitination of target proteins, leading to their degradation by the proteasome. Promotes the ubiquitination and subsequent degradation of AURKA and PLK1. Probably acts as a tumor suppressor, possibly by mediating the polyubiquitination of HDAC1, leading to its degradation. May also promote the formation of 'Lys-63'-linked polyubiquitin chains and functions with the specific ubiquitin-conjugating UBC13-MMS2 (UBE2N-UBE2V2) heterodimer. Substrates that are polyubiquitinated at 'Lys-63' are usually not targeted for degradation, but are rather involved in signaling cellular stress. The polypeptide is E3 ubiquitin-protein ligase CHFR (Chfr) (Mus musculus (Mouse)).